The sequence spans 307 residues: Type 2A encapsulin shell protein (307 aa).

This sequence belongs to the encapsulin family. Family 2A subfamily. The encapsulin nanocompartment is formed by 60 subunits; monomers form pentamers which assemble to form shells. There are 12 charged pores where the pentamers meet as well as 3-fold axis channels and dimer channels. Isolated from bacteria in a complex with cysteine desulfurase (AC Q9KII6).

The protein localises to the encapsulin nanocompartment. It localises to the cell membrane. In terms of biological role, shell component of a type 2A encapsulin nanocompartment. Forms encapsulin nanocompartments about 24 nm in diameter from 60 monomers, probably involved in sulfur metabolism. Probably encapsulates cysteine desulfurase. The sequence is that of Type 2A encapsulin shell protein from Mycolicibacterium paratuberculosis (strain ATCC BAA-968 / K-10) (Mycobacterium paratuberculosis).